Here is a 422-residue protein sequence, read N- to C-terminus: UDP-N-acetylglucosamine 1-carboxyvinyltransferase (422 aa).

Residue 22–23 (KN) participates in phosphoenolpyruvate binding. Arg-94 serves as a coordination point for UDP-N-acetyl-alpha-D-glucosamine. Cys-118 (proton donor) is an active-site residue. Cys-118 is subject to 2-(S-cysteinyl)pyruvic acid O-phosphothioketal. Residues 123–127 (RPVDL), Asp-309, and Ile-331 contribute to the UDP-N-acetyl-alpha-D-glucosamine site.

It belongs to the EPSP synthase family. MurA subfamily.

The protein resides in the cytoplasm. It carries out the reaction phosphoenolpyruvate + UDP-N-acetyl-alpha-D-glucosamine = UDP-N-acetyl-3-O-(1-carboxyvinyl)-alpha-D-glucosamine + phosphate. It participates in cell wall biogenesis; peptidoglycan biosynthesis. Functionally, cell wall formation. Adds enolpyruvyl to UDP-N-acetylglucosamine. This is UDP-N-acetylglucosamine 1-carboxyvinyltransferase from Cereibacter sphaeroides (strain KD131 / KCTC 12085) (Rhodobacter sphaeroides).